We begin with the raw amino-acid sequence, 239 residues long: Small ribosomal subunit protein eS6A (239 aa).

S235 and S236 each carry phosphoserine.

This sequence belongs to the eukaryotic ribosomal protein eS6 family. Component of the small ribosomal subunit (SSU). Mature yeast ribosomes consist of a small (40S) and a large (60S) subunit. The 40S small subunit contains 1 molecule of ribosomal RNA (18S rRNA) and at least 33 different proteins. The large 60S subunit contains 3 rRNA molecules (25S, 5.8S and 5S rRNA) and at least 46 different proteins. Interacts with snoRNA U3. uS11 interacts with MPP10. Component of the ribosomal small subunit (SSU) processome composed of at least 40 protein subunits and snoRNA U3. In terms of processing, phosphorylated.

Its subcellular location is the cytoplasm. Functionally, component of the ribosome, a large ribonucleoprotein complex responsible for the synthesis of proteins in the cell. The small ribosomal subunit (SSU) binds messenger RNAs (mRNAs) and translates the encoded message by selecting cognate aminoacyl-transfer RNA (tRNA) molecules. The large subunit (LSU) contains the ribosomal catalytic site termed the peptidyl transferase center (PTC), which catalyzes the formation of peptide bonds, thereby polymerizing the amino acids delivered by tRNAs into a polypeptide chain. The nascent polypeptides leave the ribosome through a tunnel in the LSU and interact with protein factors that function in enzymatic processing, targeting, and the membrane insertion of nascent chains at the exit of the ribosomal tunnel. eS6 is involved in nucleolar processing of pre-18S ribosomal RNA and ribosome assembly. This chain is Small ribosomal subunit protein eS6A (rps601), found in Schizosaccharomyces pombe (strain 972 / ATCC 24843) (Fission yeast).